The following is a 361-amino-acid chain: Queuine tRNA-ribosyltransferase (361 aa).

The active-site Proton acceptor is the aspartate 92. Residues aspartate 92–phenylalanine 96, aspartate 146, glutamine 189, and glycine 216 each bind substrate. The interval glycine 247–aspartate 253 is RNA binding. Catalysis depends on aspartate 266, which acts as the Nucleophile. The RNA binding; important for wobble base 34 recognition stretch occupies residues threonine 271–arginine 275. Positions 304, 306, 309, and 335 each coordinate Zn(2+).

The protein belongs to the queuine tRNA-ribosyltransferase family. As to quaternary structure, homodimer. Within each dimer, one monomer is responsible for RNA recognition and catalysis, while the other monomer binds to the replacement base PreQ1. Zn(2+) is required as a cofactor.

The enzyme catalyses 7-aminomethyl-7-carbaguanine + guanosine(34) in tRNA = 7-aminomethyl-7-carbaguanosine(34) in tRNA + guanine. It functions in the pathway tRNA modification; tRNA-queuosine biosynthesis. Its function is as follows. Catalyzes the base-exchange of a guanine (G) residue with the queuine precursor 7-aminomethyl-7-deazaguanine (PreQ1) at position 34 (anticodon wobble position) in tRNAs with GU(N) anticodons (tRNA-Asp, -Asn, -His and -Tyr). Catalysis occurs through a double-displacement mechanism. The nucleophile active site attacks the C1' of nucleotide 34 to detach the guanine base from the RNA, forming a covalent enzyme-RNA intermediate. The proton acceptor active site deprotonates the incoming PreQ1, allowing a nucleophilic attack on the C1' of the ribose to form the product. After dissociation, two additional enzymatic reactions on the tRNA convert PreQ1 to queuine (Q), resulting in the hypermodified nucleoside queuosine (7-(((4,5-cis-dihydroxy-2-cyclopenten-1-yl)amino)methyl)-7-deazaguanosine). This chain is Queuine tRNA-ribosyltransferase, found in Rickettsia akari (strain Hartford).